The chain runs to 559 residues: NXPE family member 3 (559 aa).

An N-terminal signal peptide occupies residues 1 to 30; the sequence is MWTNFFKLRLFCCLLAVLMVVVLVVNVTQV. N-linked (GlcNAc...) asparagine glycosylation is found at Asn26, Asn237, and Asn346.

It belongs to the NXPE family.

It localises to the secreted. The sequence is that of NXPE family member 3 (NXPE3) from Pongo abelii (Sumatran orangutan).